A 247-amino-acid chain; its full sequence is uncharacterized protein (247 aa).

4 residues coordinate NAD(+): leucine 19, aspartate 38, aspartate 63, and valine 64. Residue serine 142 coordinates substrate. NAD(+) is bound by residues tyrosine 155, lysine 159, and serine 190. Residue tyrosine 155 is the Proton acceptor of the active site.

Belongs to the short-chain dehydrogenases/reductases (SDR) family.

This is an uncharacterized protein from Mycobacterium bovis (strain ATCC BAA-935 / AF2122/97).